The sequence spans 367 residues: Uroporphyrinogen decarboxylase (367 aa).

At Met-1 the chain carries N-acetylmethionine. Positions 37, 39, 41, 50, 86, 164, 219, and 339 each coordinate coproporphyrinogen I. 3 residues coordinate coproporphyrinogen III: Arg-37, Ala-39, and Arg-41. Residues Asp-86, Tyr-164, Ser-219, and His-339 each coordinate coproporphyrinogen III.

This sequence belongs to the uroporphyrinogen decarboxylase family. In terms of assembly, homodimer.

The protein localises to the cytoplasm. Its subcellular location is the cytosol. It catalyses the reaction uroporphyrinogen III + 4 H(+) = coproporphyrinogen III + 4 CO2. The enzyme catalyses uroporphyrinogen I + 4 H(+) = coproporphyrinogen I + 4 CO2. It participates in porphyrin-containing compound metabolism; protoporphyrin-IX biosynthesis; coproporphyrinogen-III from 5-aminolevulinate: step 4/4. Functionally, catalyzes the sequential decarboxylation of the four acetate side chains of uroporphyrinogen to form coproporphyrinogen and participates in the fifth step in the heme biosynthetic pathway. Isomer I or isomer III of uroporphyrinogen may serve as substrate, but only coproporphyrinogen III can ultimately be converted to heme. In vitro also decarboxylates pentacarboxylate porphyrinogen I. The chain is Uroporphyrinogen decarboxylase from Ovis aries (Sheep).